A 460-amino-acid chain; its full sequence is Bifunctional protein GlmU (460 aa).

A pyrophosphorylase region spans residues 1 to 229 (MTNYAIILAA…FNESLGVNDR (229 aa)). UDP-N-acetyl-alpha-D-glucosamine is bound by residues 8 to 11 (LAAG), K22, Q72, and 77 to 78 (GT). Residue D102 participates in Mg(2+) binding. The UDP-N-acetyl-alpha-D-glucosamine site is built by G139, E154, N169, and N227. Residue N227 participates in Mg(2+) binding. Residues 230–250 (VALAIAETVMRQRITQKHMVN) form a linker region. The segment at 251–460 (GVTFQNPETV…RLAHHPSRSK (210 aa)) is N-acetyltransferase. 2 residues coordinate UDP-N-acetyl-alpha-D-glucosamine: R332 and K350. The Proton acceptor role is filled by H362. Residues Y365 and N376 each coordinate UDP-N-acetyl-alpha-D-glucosamine. Acetyl-CoA is bound by residues A379, 385–386 (NY), S404, A422, and R439.

In the N-terminal section; belongs to the N-acetylglucosamine-1-phosphate uridyltransferase family. The protein in the C-terminal section; belongs to the transferase hexapeptide repeat family. In terms of assembly, homotrimer. Mg(2+) serves as cofactor.

It is found in the cytoplasm. The enzyme catalyses alpha-D-glucosamine 1-phosphate + acetyl-CoA = N-acetyl-alpha-D-glucosamine 1-phosphate + CoA + H(+). The catalysed reaction is N-acetyl-alpha-D-glucosamine 1-phosphate + UTP + H(+) = UDP-N-acetyl-alpha-D-glucosamine + diphosphate. Its pathway is nucleotide-sugar biosynthesis; UDP-N-acetyl-alpha-D-glucosamine biosynthesis; N-acetyl-alpha-D-glucosamine 1-phosphate from alpha-D-glucosamine 6-phosphate (route II): step 2/2. It functions in the pathway nucleotide-sugar biosynthesis; UDP-N-acetyl-alpha-D-glucosamine biosynthesis; UDP-N-acetyl-alpha-D-glucosamine from N-acetyl-alpha-D-glucosamine 1-phosphate: step 1/1. The protein operates within bacterial outer membrane biogenesis; LPS lipid A biosynthesis. Its function is as follows. Catalyzes the last two sequential reactions in the de novo biosynthetic pathway for UDP-N-acetylglucosamine (UDP-GlcNAc). The C-terminal domain catalyzes the transfer of acetyl group from acetyl coenzyme A to glucosamine-1-phosphate (GlcN-1-P) to produce N-acetylglucosamine-1-phosphate (GlcNAc-1-P), which is converted into UDP-GlcNAc by the transfer of uridine 5-monophosphate (from uridine 5-triphosphate), a reaction catalyzed by the N-terminal domain. This Streptococcus pyogenes serotype M1 protein is Bifunctional protein GlmU.